Here is a 461-residue protein sequence, read N- to C-terminus: Sensor histidine kinase MctS (461 aa).

Helical transmembrane passes span 7 to 27 (IIAL…TFIT) and 203 to 223 (FVIV…TCML). Phosphohistidine; by autocatalysis is present on His-259. The region spanning 360-450 (LYRVAQEAFN…TLTAMMPKSA (91 aa)) is the Histidine kinase domain.

The protein localises to the cell membrane. It carries out the reaction ATP + protein L-histidine = ADP + protein N-phospho-L-histidine.. In terms of biological role, member of the two-component regulatory system MctS/MctR, which activates mctP expression. The protein is Sensor histidine kinase MctS of Rhizobium johnstonii (strain DSM 114642 / LMG 32736 / 3841) (Rhizobium leguminosarum bv. viciae).